Consider the following 78-residue polypeptide: MICOS complex subunit MIC10 (78 aa).

N-acetylserine is present on S2. The helical transmembrane segment at 17–36 (AVVKIGTGFGLGIVFSLTFF) threads the bilayer. At 37–78 (KRRMWPLAFGSGMGLGMAYSNCQHDFQAPYLLHGKYVKEQEQ) the chain is on the mitochondrial intermembrane side.

It belongs to the MICOS complex subunit Mic10 family. As to quaternary structure, component of the mitochondrial contact site and cristae organizing system (MICOS) complex, composed of at least MICOS10/MIC10, CHCHD3/MIC19, CHCHD6/MIC25, APOOL/MIC27, IMMT/MIC60, APOO/MIC23/MIC26 and MICOS13/MIC13. This complex was also known under the names MINOS or MitOS complex. The MICOS complex associates with mitochondrial outer membrane proteins SAMM50, MTX1 and MTX2 (together described as components of the mitochondrial outer membrane sorting assembly machinery (SAM) complex) and DNAJC11, mitochondrial inner membrane protein TMEM11 and with HSPA9. The MICOS and SAM complexes together with DNAJC11 are part of a large protein complex spanning both membranes termed the mitochondrial intermembrane space bridging (MIB) complex. Interacts with IMMT/MIC60 and MICOS13/MIC13. Interacts with APOO/MIC23/MIC26 and APOOL/MIC27. Interacts with ARMC1.

It is found in the mitochondrion inner membrane. Its function is as follows. Component of the MICOS complex, a large protein complex of the mitochondrial inner membrane that plays crucial roles in the maintenance of crista junctions, inner membrane architecture, and formation of contact sites to the outer membrane. In Homo sapiens (Human), this protein is MICOS complex subunit MIC10.